Consider the following 611-residue polypeptide: Creatine transporter (611 aa).

A helical membrane pass occupies residues 45-65 (FIMSCVGFAVGLGNVWRFPYL). Residues 66-71 (CYKNGG) lie on the Extracellular side of the membrane. The helical transmembrane segment at 72-92 (GVFLIPYLLVAVFGGIPIFFL) threads the bilayer. Topologically, residues 93 to 122 (EISLGQFMKAGGINAWNIAPLFKGLGYASM) are cytoplasmic. The helical transmembrane segment at 123–143 (VIVFFCNTYYILVLTWSSFYL) threads the bilayer. The Extracellular portion of the chain corresponds to 144-207 (VQSFSSPLPW…LSSGLGDVGE (64 aa)). N-linked (GlcNAc...) asparagine glycosylation is found at Asn-157 and Asn-171. The helical transmembrane segment at 208-228 (IGWELTLCLTATWMLVYFCIW) threads the bilayer. Residues 229–246 (KGVKTSGKVVYVTATFPY) lie on the Cytoplasmic side of the membrane. Residues 247-267 (IILVILLVRGVTLHGAVQGIV) traverse the membrane as a helical segment. Residues 268-281 (YYLQPDWGKLGEAQ) are Extracellular-facing. Residues 282-302 (VWIDAGTQIFFSYAIGLGTLT) form a helical membrane-spanning segment. Residues 303–318 (ALGSYNQLHNDCYKDA) are Cytoplasmic-facing. Residues 319–339 (FILSLVNSATSFFAGLVVFSI) traverse the membrane as a helical segment. Over 340-371 (LGFMAVEEGVDISVVAESGPGLAFIAYPKAVT) the chain is Extracellular. Residues 372 to 392 (LMPFPQVWAVLFFIMLLCLGL) form a helical membrane-spanning segment. The Cytoplasmic portion of the chain corresponds to 393–421 (GSQFVGVEGFVTAILDLWPSKFSFRYLRE). A helical transmembrane segment spans residues 422–442 (VVVAMVICLSFLIDLSMITEG). At 443 to 456 (GMYIFQIFDYYSAS) the chain is on the extracellular side. Residues 457-477 (GTTLLWTAFWECVAVAWVYGG) traverse the membrane as a helical segment. Residues 478–497 (DRYLDDLAWMLGYRPWALVK) lie on the Cytoplasmic side of the membrane. The helical transmembrane segment at 498 to 518 (WCWSVITPLVCMGIFTFHLVN) threads the bilayer. Residues 519–537 (YKPLTYNKTYTYPWWGEAI) are Extracellular-facing. Asn-525 carries an N-linked (GlcNAc...) asparagine glycan. Residues 538 to 558 (GWCLALASMLCVPTTVLYSLS) form a helical membrane-spanning segment. The Cytoplasmic portion of the chain corresponds to 559-611 (RGRGSLKERWRKLTTPVWASHHLAYKMAGAKINQPCEGVVSCEEKVVIFESVL).

Belongs to the sodium:neurotransmitter symporter (SNF) (TC 2.A.22) family.

Its subcellular location is the membrane. Required for the uptake of creatine. The polypeptide is Creatine transporter (Torpedo marmorata (Marbled electric ray)).